The chain runs to 321 residues: Glutaminase (321 aa).

Residues Ser-69, Asn-120, Glu-165, Asn-172, Tyr-196, Tyr-248, and Val-266 each coordinate substrate.

Belongs to the glutaminase family. As to quaternary structure, homotetramer.

The catalysed reaction is L-glutamine + H2O = L-glutamate + NH4(+). The protein is Glutaminase of Parabacteroides distasonis (strain ATCC 8503 / DSM 20701 / CIP 104284 / JCM 5825 / NCTC 11152).